The chain runs to 50 residues: Large ribosomal subunit protein bL33 (50 aa).

The protein belongs to the bacterial ribosomal protein bL33 family.

This is Large ribosomal subunit protein bL33 from Endomicrobium trichonymphae.